A 77-amino-acid chain; its full sequence is uncharacterized protein (77 aa).

This is an uncharacterized protein from Bacillus subtilis (strain 168).